We begin with the raw amino-acid sequence, 164 residues long: UPF0305 protein MTH_812 (164 aa).

This sequence belongs to the UPF0305 family.

This Methanothermobacter thermautotrophicus (strain ATCC 29096 / DSM 1053 / JCM 10044 / NBRC 100330 / Delta H) (Methanobacterium thermoautotrophicum) protein is UPF0305 protein MTH_812.